A 353-amino-acid chain; its full sequence is Photosystem II protein D1 (353 aa).

Threonine 2 is modified (N-acetylthreonine). Position 2 is a phosphothreonine (threonine 2). 3 helical membrane-spanning segments follow: residues 29–46, 118–133, and 142–156; these read YIGWFGVLMIPTLLTATS, HFLLGVACYMGREWEL, and WIAVAYSAPVAAATA. Histidine 118 contributes to the chlorophyll a binding site. Tyrosine 126 is a binding site for pheophytin a. [CaMn4O5] cluster is bound by residues aspartate 170 and glutamate 189. A helical transmembrane segment spans residues 197-218; that stretch reads FHMLGVAGVFGGSLFSAMHGSL. Chlorophyll a is bound at residue histidine 198. Residues histidine 215 and 264–265 contribute to the a quinone site; that span reads SF. Histidine 215 is a Fe cation binding site. Histidine 272 serves as a coordination point for Fe cation. Residues 274–288 form a helical membrane-spanning segment; the sequence is FLAAWPVVGIWFTAL. [CaMn4O5] cluster-binding residues include histidine 332, glutamate 333, aspartate 342, and alanine 344. The propeptide occupies 345 to 353; that stretch reads AVEANSIDG.

This sequence belongs to the reaction center PufL/M/PsbA/D family. In terms of assembly, PSII is composed of 1 copy each of membrane proteins PsbA, PsbB, PsbC, PsbD, PsbE, PsbF, PsbH, PsbI, PsbJ, PsbK, PsbL, PsbM, PsbT, PsbX, PsbY, PsbZ, Psb30/Ycf12, at least 3 peripheral proteins of the oxygen-evolving complex and a large number of cofactors. It forms dimeric complexes. Requires The D1/D2 heterodimer binds P680, chlorophylls that are the primary electron donor of PSII, and subsequent electron acceptors. It shares a non-heme iron and each subunit binds pheophytin, quinone, additional chlorophylls, carotenoids and lipids. D1 provides most of the ligands for the Mn4-Ca-O5 cluster of the oxygen-evolving complex (OEC). There is also a Cl(-1) ion associated with D1 and D2, which is required for oxygen evolution. The PSII complex binds additional chlorophylls, carotenoids and specific lipids. as cofactor. Post-translationally, tyr-161 forms a radical intermediate that is referred to as redox-active TyrZ, YZ or Y-Z. In terms of processing, C-terminally processed by CTPA; processing is essential to allow assembly of the oxygen-evolving complex and thus photosynthetic growth.

Its subcellular location is the plastid. It localises to the chloroplast thylakoid membrane. It catalyses the reaction 2 a plastoquinone + 4 hnu + 2 H2O = 2 a plastoquinol + O2. Photosystem II (PSII) is a light-driven water:plastoquinone oxidoreductase that uses light energy to abstract electrons from H(2)O, generating O(2) and a proton gradient subsequently used for ATP formation. It consists of a core antenna complex that captures photons, and an electron transfer chain that converts photonic excitation into a charge separation. The D1/D2 (PsbA/PsbD) reaction center heterodimer binds P680, the primary electron donor of PSII as well as several subsequent electron acceptors. This is Photosystem II protein D1 from Cryptomeria japonica (Japanese cedar).